The primary structure comprises 169 residues: Proepiregulin (169 aa).

The first 29 residues, 1–29 (MTAGRRMEMLCAGRVPALLLCLGFHLLQA), serve as a signal peptide directing secretion. Positions 30-62 (VLSTTVIPSCIPGESSDNCTALVQTEDNPRVAQ) are excised as a propeptide. The N-linked (GlcNAc...) asparagine glycan is linked to Asn47. Topologically, residues 60–119 (VAQVSITKCSSDMNGYCLHGQCIYLVDMSQNYCRCEVGYTGVRCEHFFLTVHQPLSKEYV) are extracellular. The 41-residue stretch at 64-104 (SITKCSSDMNGYCLHGQCIYLVDMSQNYCRCEVGYTGVRCE) folds into the EGF-like domain. 3 disulfide bridges follow: Cys68/Cys81, Cys76/Cys92, and Cys94/Cys103. Residues 109–169 (TVHQPLSKEY…TSGDPELPQV (61 aa)) constitute a propeptide, removed in mature form. A helical membrane pass occupies residues 120 to 140 (ALTVILIILFLITVVGSTYYF). The Cytoplasmic segment spans residues 141–169 (CRWYRNRKSKEPKKEYERVTSGDPELPQV).

As to quaternary structure, interacts with EGFR and ERBB4. In normal adults, expressed predominantly in the placenta and peripheral blood leukocytes. High levels were detected in carcinomas of the bladder, lung, kidney and colon.

Its subcellular location is the secreted. The protein localises to the extracellular space. The protein resides in the cell membrane. Ligand of the EGF receptor/EGFR and ERBB4. Stimulates EGFR and ERBB4 tyrosine phosphorylation. Contributes to inflammation, wound healing, tissue repair, and oocyte maturation by regulating angiogenesis and vascular remodeling and by stimulating cell proliferation. This Homo sapiens (Human) protein is Proepiregulin (EREG).